Reading from the N-terminus, the 471-residue chain is Tyrosine--tRNA ligase, mitochondrial (471 aa).

Y71 is an L-tyrosine binding site. Residue D75 participates in ATP binding. The short motif at 76–85 is the 'HIGH' region element; the sequence is PTGDSLHVGH. Residues D115, Y215, Q219, D222, and Q241 each contribute to the L-tyrosine site. ATP is bound by residues I268 and K278. Positions 275–279 match the 'KMSKS' region motif; it reads KLGKS. 2 positions are modified to N6-acetyllysine: K349 and K361.

Belongs to the class-I aminoacyl-tRNA synthetase family. Homodimer.

The protein localises to the mitochondrion matrix. The enzyme catalyses tRNA(Tyr) + L-tyrosine + ATP = L-tyrosyl-tRNA(Tyr) + AMP + diphosphate + H(+). Functionally, catalyzes the attachment of tyrosine to tRNA(Tyr) in a two-step reaction: tyrosine is first activated by ATP to form Tyr-AMP and then transferred to the acceptor end of tRNA(Tyr). In Rattus norvegicus (Rat), this protein is Tyrosine--tRNA ligase, mitochondrial (Yars2).